A 541-amino-acid chain; its full sequence is Glucose-6-phosphate isomerase (541 aa).

The Proton donor role is filled by Glu346. Residues His377 and Lys506 contribute to the active site.

It belongs to the GPI family.

Its subcellular location is the cytoplasm. The enzyme catalyses alpha-D-glucose 6-phosphate = beta-D-fructose 6-phosphate. It participates in carbohydrate biosynthesis; gluconeogenesis. It functions in the pathway carbohydrate degradation; glycolysis; D-glyceraldehyde 3-phosphate and glycerone phosphate from D-glucose: step 2/4. Catalyzes the reversible isomerization of glucose-6-phosphate to fructose-6-phosphate. This is Glucose-6-phosphate isomerase from Rhizobium meliloti (strain 1021) (Ensifer meliloti).